We begin with the raw amino-acid sequence, 100 residues long: NADH-quinone oxidoreductase subunit K (100 aa).

A run of 3 helical transmembrane segments spans residues 1 to 21 (MIGL…GLAG), 28 to 48 (ILLL…GFVA), and 64 to 84 (FIIS…ILWF).

Belongs to the complex I subunit 4L family. As to quaternary structure, NDH-1 is composed of 14 different subunits. Subunits NuoA, H, J, K, L, M, N constitute the membrane sector of the complex.

It localises to the cell inner membrane. The catalysed reaction is a quinone + NADH + 5 H(+)(in) = a quinol + NAD(+) + 4 H(+)(out). In terms of biological role, NDH-1 shuttles electrons from NADH, via FMN and iron-sulfur (Fe-S) centers, to quinones in the respiratory chain. The immediate electron acceptor for the enzyme in this species is believed to be ubiquinone. Couples the redox reaction to proton translocation (for every two electrons transferred, four hydrogen ions are translocated across the cytoplasmic membrane), and thus conserves the redox energy in a proton gradient. This is NADH-quinone oxidoreductase subunit K from Helicobacter pylori (strain ATCC 700392 / 26695) (Campylobacter pylori).